Consider the following 340-residue polypeptide: Methionine import ATP-binding protein MetN (340 aa).

Residues 2-241 (IRIENLTKIY…PQSSVAKEFI (240 aa)) enclose the ABC transporter domain. Position 38 to 45 (38 to 45 (GLSGAGKS)) interacts with ATP.

Belongs to the ABC transporter superfamily. Methionine importer (TC 3.A.1.24) family. As to quaternary structure, the complex is composed of two ATP-binding proteins (MetN), two transmembrane proteins (MetI) and a solute-binding protein (MetQ).

The protein resides in the cell membrane. It catalyses the reaction L-methionine(out) + ATP + H2O = L-methionine(in) + ADP + phosphate + H(+). It carries out the reaction D-methionine(out) + ATP + H2O = D-methionine(in) + ADP + phosphate + H(+). Part of the ABC transporter complex MetNIQ involved in methionine import. Responsible for energy coupling to the transport system. The chain is Methionine import ATP-binding protein MetN from Desulfitobacterium hafniense (strain Y51).